A 176-amino-acid polypeptide reads, in one-letter code: Large ribosomal subunit protein uL6 (176 aa).

This sequence belongs to the universal ribosomal protein uL6 family. Part of the 50S ribosomal subunit.

In terms of biological role, this protein binds to the 23S rRNA, and is important in its secondary structure. It is located near the subunit interface in the base of the L7/L12 stalk, and near the tRNA binding site of the peptidyltransferase center. This is Large ribosomal subunit protein uL6 from Burkholderia lata (strain ATCC 17760 / DSM 23089 / LMG 22485 / NCIMB 9086 / R18194 / 383).